A 261-amino-acid polypeptide reads, in one-letter code: Triosephosphate isomerase (261 aa).

Asn10–Lys12 lines the substrate pocket. Residue His100 is the Electrophile of the active site. Glu172 serves as the catalytic Proton acceptor. Substrate is bound by residues Gly178, Ser218, and Gly239–Gly240.

The protein belongs to the triosephosphate isomerase family. As to quaternary structure, homodimer.

It localises to the cytoplasm. It carries out the reaction D-glyceraldehyde 3-phosphate = dihydroxyacetone phosphate. It functions in the pathway carbohydrate biosynthesis; gluconeogenesis. The protein operates within carbohydrate degradation; glycolysis; D-glyceraldehyde 3-phosphate from glycerone phosphate: step 1/1. In terms of biological role, involved in the gluconeogenesis. Catalyzes stereospecifically the conversion of dihydroxyacetone phosphate (DHAP) to D-glyceraldehyde-3-phosphate (G3P). This Mycolicibacterium paratuberculosis (strain ATCC BAA-968 / K-10) (Mycobacterium paratuberculosis) protein is Triosephosphate isomerase.